The sequence spans 372 residues: Transcription factor YY2 (372 aa).

Residues 32 to 102 form a mediates transcriptional activation region; the sequence is MEDIPTESVQ…SDNQLGNDLE (71 aa). The span at 126–136 shows a compositional bias: low complexity; the sequence is SAASTSTSTQS. Disordered regions lie at residues 126–172 and 186–210; these read SAAS…WEQK and TMWS…PPDY. Over residues 137-146 the composition is skewed to basic residues; that stretch reads RSKKPSKKPS. Polar residues-rich tracts occupy residues 154-165 and 186-196; these read EANPAGSSSSLG and TMWSPNDNNDQ. Positions 237–372 are mediates transcriptional repression; that stretch reads EFTKVKPKRS…LTHVKTKNNP (136 aa). C2H2-type zinc fingers lie at residues 254–278, 283–305, 311–335, and 341–365; these read VPCS…LHIH, HVCA…QLVH, FQCT…LRIH, and FVCP…ILTH.

This sequence belongs to the YY transcription factor family. Expressed in kidney, liver, spleen and testis but not in colon.

The protein resides in the nucleus. Functionally, functions as a multifunctional transcription factor that may exhibit positive and negative control on a large number of genes. May antagonize YY1 and function in development and differentiation. The protein is Transcription factor YY2 (YY2) of Homo sapiens (Human).